A 197-amino-acid chain; its full sequence is MDHMKTLVLVVHPNIESSRINKKWKEAVLSEPDVTVHDLYEKYRDQPIDVEFEQQQLLAHDRIVFQFPLYWYSSPPLLKQWFDEVFTFGWAHGPGGNKLKGKEWVTAMSIGSPEHSYQAGGYNLFSISELTKPFQASAHLVGMTYLPSFAEYRANTISDQEIAESANRYVKHITNIELNPKVRLQRYLKQLESVDLT.

Belongs to the NAD(P)H dehydrogenase (quinone) family.

This is an uncharacterized protein from Bacillus subtilis (strain 168).